An 89-amino-acid polypeptide reads, in one-letter code: Large ribosomal subunit protein eL34 (89 aa).

Belongs to the eukaryotic ribosomal protein eL34 family.

The sequence is that of Large ribosomal subunit protein eL34 (rpl34e) from Methanocaldococcus jannaschii (strain ATCC 43067 / DSM 2661 / JAL-1 / JCM 10045 / NBRC 100440) (Methanococcus jannaschii).